The sequence spans 305 residues: Serine/threonine-protein phosphatase 6 catalytic subunit (305 aa).

Residue Met1 is modified to N-acetylmethionine. The Mn(2+) site is built by Asp53, His55, Asp81, and Asn113. The active-site Proton donor is His114. Residues His163 and His237 each contribute to the Mn(2+) site.

The protein belongs to the PPP phosphatase family. PP-6 (PP-V) subfamily. In terms of assembly, protein phosphatase 6 (PP6) holoenzyme is proposed to be a heterotrimeric complex formed by the catalytic subunit, a SAPS domain-containing subunit (PP6R) and an ankyrin repeat-domain containing regulatory subunit (ARS). Interacts with subunits PPP6R1, PPP6R2 and PPP6R3. Interacts with subunit ANKRD28. Interacts with IGBP1. Interacts with MAP3K7. Interacts with NFKBIE. Interacts with TRIM14 and WRNIP1; these interactions positively regulate the RIG-I signaling pathway. Requires Mn(2+) as cofactor. In terms of tissue distribution, ubiquitously expressed in all tissues tested with strongest expression in lung, spleen, liver, kidney and brain. Weaker expression observed in bladder, pancreas, heart and skeletal muscle.

The protein localises to the mitochondrion. It localises to the cytoplasm. It catalyses the reaction O-phospho-L-seryl-[protein] + H2O = L-seryl-[protein] + phosphate. The enzyme catalyses O-phospho-L-threonyl-[protein] + H2O = L-threonyl-[protein] + phosphate. Functionally, catalytic subunit of protein phosphatase 6 (PP6). PP6 is a component of a signaling pathway regulating cell cycle progression in response to IL2 receptor stimulation. N-terminal domain restricts G1 to S phase progression in cancer cells, in part through control of cyclin D13 During mitosis, regulates spindle positioning. Down-regulates MAP3K7 kinase activation of the IL1 signaling pathway by dephosphorylation of MAP3K7. Acts as a regulator of innate immunity by mediating dephosphorylation CGAS, STING1 and RIGI. Also participates in the innate immune defense against viruses by desphosphorylating RIGI, an essential step that triggers RIGI-mediated signaling activation. Also regulates innate immunity by acting as a negative regulator of the cGAS-STING pathway: mediates dephosphorylation and inactivation of CGAS and STING1. CGAS dephosphorylation at 'Ser-420' impairs its ability to bind GTP, thereby inactivating it. The protein is Serine/threonine-protein phosphatase 6 catalytic subunit of Mus musculus (Mouse).